Here is a 219-residue protein sequence, read N- to C-terminus: OVARIAN TUMOR DOMAIN-containing deubiquitinating enzyme 12 (219 aa).

Residues Leu-79 to Ile-203 enclose the OTU domain. Asp-87 is an active-site residue. Cys-90 serves as the catalytic Nucleophile. His-196 is a catalytic residue.

It belongs to the peptidase C85 family.

The enzyme catalyses Thiol-dependent hydrolysis of ester, thioester, amide, peptide and isopeptide bonds formed by the C-terminal Gly of ubiquitin (a 76-residue protein attached to proteins as an intracellular targeting signal).. In terms of biological role, hydrolase that can remove conjugated ubiquitin from proteins in vitro and may therefore play an important regulatory role at the level of protein turnover by preventing degradation. Inactive cysteine protease. This chain is OVARIAN TUMOR DOMAIN-containing deubiquitinating enzyme 12, found in Arabidopsis thaliana (Mouse-ear cress).